Consider the following 413-residue polypeptide: MSSDMRVHSWSCSYYLDLEKQWVSGKLTLTPHSLKFIVEKTEEVLVGLPLSSIIEIRKESSLFIFGAITVLEKGQTKHWFSSLQPSRNVVFNVIEHFWRELLLSQPGTAANIPSHVTRGQELIGLMANSQKRMEDTAKDLQQQSEQLDSVLKGLEKMESDLDVADRLLTELETPSWWPFGSKFWKMPAEENLKEGVSSTCEPFGKEGVVITVPAIISERAESHSKLGKLTVLVSALEIYDSCSLLLHRFEKEDVDDIKVHSPYEVSIRQRFIGKPDVAYQLISAKMPEVIPILEVQFSSKIELLEDALVLRNKVFASSAERHAASRPKGCTPHRELPTGGQEGEQLQLQKNLPLFSEGEAQELTQILSKMKGLALDTEAELERQDAALDGITVAVDRATLNVDKQNRRMRKLM.

Residues Ala109 to Leu171 form the t-SNARE coiled-coil homology 1 domain. The segment at Arg321–Glu342 is disordered. One can recognise a t-SNARE coiled-coil homology 2 domain in the interval Lys350–Leu412.

It belongs to the SVAP1 family. Associates with the BLOC-1 complex. Interacts with BLOC1S6. Forms a complex containing SNAP47, VAMP2 and STX1A. In terms of tissue distribution, ubiquitously expressed with the most abundant expression in the brain. In brain, most highly expressed in the glomerular layer of the olfactory bulb, the cortex, striatum, hippocampus, and colliculi (at protein level).

The protein localises to the endomembrane system. It is found in the cytoplasm. It localises to the perinuclear region. Functionally, may play a role in intracellular membrane fusion. This chain is Synaptosomal-associated protein 47 (Snap47), found in Mus musculus (Mouse).